A 571-amino-acid polypeptide reads, in one-letter code: uncharacterized protein (571 aa).

Residues 1–3 (MNS) are Cytoplasmic-facing. A helical membrane pass occupies residues 4 to 24 (LQILSFVGFTLLVAVITWWKV). Residues 25 to 74 (RKTDTGSQQGYFLAGRSLKAPVIAASLMLTNLSTEQLVGLSGQAYKSGMS) lie on the Periplasmic side of the membrane. A helical transmembrane segment spans residues 75–95 (VMGWEVTSAVTLIFLALIFLP). Topologically, residues 96 to 118 (RYLKRGIATIPDFLEERYDKTTR) are cytoplasmic. Residues 119–139 (IIIDFCFLIATGVCFLPIVLY) form a helical membrane-spanning segment. Residues 140 to 162 (SGALALNSLFHVGESLQISHGAA) are Periplasmic-facing. The helical transmembrane segment at 163–183 (IWLLVILLGLAGILYAVIGGL) threads the bilayer. Residues 184–191 (RAMAVADS) are Cytoplasmic-facing. The chain crosses the membrane as a helical span at residues 192–212 (INGIGLVIGGLMVPVFGLIAM). The Periplasmic segment spans residues 213-240 (GKGSFMQGIEQLTTVHAEKLNSIGGPTD). Residues 241–261 (PLPIGAAFTGLILVNTFYWCT) traverse the membrane as a helical segment. Over 262 to 283 (NQGIVQRTLASKSLAEGQKGAL) the chain is Cytoplasmic. A helical membrane pass occupies residues 284–304 (LTAVLKMLDPLVLVLPGLIAF). Over 305-324 (HLYQDLPKADMAYPTLVNNV) the chain is Periplasmic. Residues 325 to 345 (LPVPMVGFFGAVLFGAVISTF) traverse the membrane as a helical segment. Residues 346–380 (NGFLNSASTLFSMGIYRRIINQNAEPQQLVTVGRK) lie on the Cytoplasmic side of the membrane. A helical transmembrane segment spans residues 381–401 (FGFFIAIVSVLVAPWIANAPQ). Topologically, residues 402–415 (GLYSWMKQLNGIYN) are periplasmic. A helical membrane pass occupies residues 416–436 (VPLVTIIIMGFFFPRIPALAA). Position 437 (lysine 437) is a topological domain, cytoplasmic. Residues 438-458 (VAMGIGIISYITINYLVKFDF) form a helical membrane-spanning segment. The Periplasmic portion of the chain corresponds to 459-460 (HF). A helical transmembrane segment spans residues 461–481 (LYVLACTFCINVVVMLVIGFI). Topologically, residues 482–505 (KPRATPFTFKDAFAVDMKPWKNVK) are cytoplasmic. Residues 506-526 (IASIGILFAMIGVYAGLAEFG) traverse the membrane as a helical segment. At 527–532 (GYGTRW) the chain is on the periplasmic side. Residues 533 to 553 (LAMISYFIAAVVIVYLIFDSW) form a helical membrane-spanning segment. The Cytoplasmic portion of the chain corresponds to 554–571 (RHRHDPAVTFTPDGKDSL).

Belongs to the sodium:solute symporter (SSF) (TC 2.A.21) family.

The protein localises to the cell inner membrane. This is an uncharacterized protein from Escherichia coli (strain K12).